Reading from the N-terminus, the 856-residue chain is Inactive rhomboid protein 1 (856 aa).

A disordered region spans residues 1 to 20 (MSEARRDSTSSLQRKKPPWL). Over 1-412 (MSEARRDSTS…HRPFFTYWLT (412 aa)) the chain is Cytoplasmic. 2 positions are modified to phosphoserine: S76 and S176. Phosphothreonine occurs at positions 180 and 183. At S391 the chain carries Phosphoserine. Residues 413-433 (FVHSLVTILAVCIYGIAPVGF) traverse the membrane as a helical segment. Residues 434–656 (SQHETVDSVL…NPEVPDQFYR (223 aa)) are Lumenal-facing. N584 is a glycosylation site (N-linked (GlcNAc...) asparagine). Residues 657–677 (LWLSLFLHAGILHCLVSVCFQ) form a helical membrane-spanning segment. Residues 678-692 (MTVLRDLEKLAGWHR) lie on the Cytoplasmic side of the membrane. Residues 693–713 (IAIIYLLSGVTGNLASAIFLP) form a helical membrane-spanning segment. Residues 714 to 715 (YR) lie on the Lumenal side of the membrane. Residues 716-736 (AEVGPAGSQFGILACLFVELF) form a helical membrane-spanning segment. The Cytoplasmic portion of the chain corresponds to 737-747 (QSWQILARPWR). The chain crosses the membrane as a helical span at residues 748-768 (AFFKLLAVVLFLFAFGLLPWI). Residues 769–773 (DNFAH) lie on the Lumenal side of the membrane. The chain crosses the membrane as a helical span at residues 774–794 (ISGFVSGLFLSFAFLPYISFG). The Cytoplasmic segment spans residues 795-804 (KFDLYRKRCQ). The helical transmembrane segment at 805–825 (IIIFQAVFLGLLAGLVVLFYF) threads the bilayer. Over 826–856 (YPVRCEWCEFLTCIPFTDKFCEKYELDAQLH) the chain is Lumenal.

Belongs to the peptidase S54 family. As to quaternary structure, homodimer, or homooligomer. Interacts with TGFA and HBEGF. Interacts with EGF; may retain EGF in the endoplasmic reticulum and regulates its degradation through the endoplasmic reticulum-associated degradation (ERAD). Interacts (via cytoplasmic N-terminus) with FRMD8/iTAP; this interaction leads to mutual protein stabilization. Interacts with ADAM17/TACE.

It is found in the endoplasmic reticulum membrane. The protein resides in the golgi apparatus membrane. Its function is as follows. Regulates ADAM17 protease, a sheddase of the epidermal growth factor (EGF) receptor ligands and TNF, thereby plays a role in sleep, cell survival, proliferation, migration and inflammation. Does not exhibit any protease activity on its own. The sequence is that of Inactive rhomboid protein 1 (Rhbdf1) from Rattus norvegicus (Rat).